A 49-amino-acid chain; its full sequence is Osteocalcin (49 aa).

Residues 1 to 47 (YLYQWLGAPAPYPDPLEPKREVCELNPDCDELADHIGFQEAYRRFYG) form the Gla domain. At proline 9 the chain carries 4-hydroxyproline. Ca(2+) contacts are provided by glutamate 17, glutamate 21, glutamate 24, and aspartate 30. 4-carboxyglutamate occurs at positions 17, 21, and 24. Cysteine 23 and cysteine 29 form a disulfide bridge.

It belongs to the osteocalcin/matrix Gla protein family. Gamma-carboxyglutamate residues are formed by vitamin K dependent carboxylation by GGCX. These residues are essential for the binding of calcium. Decarboxylation promotes the hormone activity.

The protein localises to the secreted. Functionally, the carboxylated form is one of the main organic components of the bone matrix, which constitutes 1-2% of the total bone protein: it acts as a negative regulator of bone formation and is required to limit bone formation without impairing bone resorption or mineralization. The carboxylated form binds strongly to apatite and calcium. Its function is as follows. The uncarboxylated form acts as a hormone secreted by osteoblasts, which regulates different cellular processes, such as energy metabolism, male fertility and brain development. Regulates of energy metabolism by acting as a hormone favoring pancreatic beta-cell proliferation, insulin secretion and sensitivity and energy expenditure. Uncarboxylated osteocalcin hormone also promotes testosterone production in the testes: acts as a ligand for G protein-coupled receptor GPRC6A at the surface of Leydig cells, initiating a signaling response that promotes the expression of enzymes required for testosterone synthesis in a CREB-dependent manner. Also acts as a regulator of brain development: osteocalcin hormone crosses the blood-brain barrier and acts as a ligand for GPR158 on neurons, initiating a signaling response that prevents neuronal apoptosis in the hippocampus, favors the synthesis of all monoamine neurotransmitters and inhibits that of gamma-aminobutyric acid (GABA). Osteocalcin also crosses the placenta during pregnancy and maternal osteocalcin is required for fetal brain development. This chain is Osteocalcin (BGLAP), found in Macaca fascicularis (Crab-eating macaque).